We begin with the raw amino-acid sequence, 449 residues long: Phosphoglucosamine mutase (449 aa).

The Phosphoserine intermediate role is filled by Ser101. 4 residues coordinate Mg(2+): Ser101, Asp243, Asp245, and Asp247. Position 101 is a phosphoserine (Ser101).

The protein belongs to the phosphohexose mutase family. Requires Mg(2+) as cofactor. In terms of processing, activated by phosphorylation.

It catalyses the reaction alpha-D-glucosamine 1-phosphate = D-glucosamine 6-phosphate. In terms of biological role, catalyzes the conversion of glucosamine-6-phosphate to glucosamine-1-phosphate. This is Phosphoglucosamine mutase from Syntrophus aciditrophicus (strain SB).